The chain runs to 230 residues: Heptaprenylglyceryl phosphate synthase (230 aa).

Lys-12 is a binding site for sn-glycerol 1-phosphate. Residues Asp-14 and Thr-40 each contribute to the Mg(2+) site. Sn-glycerol 1-phosphate contacts are provided by residues 159 to 164 (YVEYSG), Gly-189, and 209 to 210 (GD).

It belongs to the GGGP/HepGP synthase family. Group I subfamily. In terms of assembly, homodimer. Mg(2+) is required as a cofactor.

The enzyme catalyses sn-glycerol 1-phosphate + all-trans-heptaprenyl diphosphate = 3-heptaprenyl-sn-glycero-1-phosphate + diphosphate. The protein operates within membrane lipid metabolism; glycerophospholipid metabolism. Its function is as follows. Prenyltransferase that catalyzes in vivo the transfer of the heptaprenyl moiety of heptaprenyl pyrophosphate (HepPP; 35 carbon atoms) to the C3 hydroxyl of sn-glycerol-1-phosphate (G1P), producing heptaprenylglyceryl phosphate (HepGP). This reaction is an ether-bond-formation step in the biosynthesis of archaea-type G1P-based membrane lipids found in Bacillales. The protein is Heptaprenylglyceryl phosphate synthase of Staphylococcus epidermidis (strain ATCC 35984 / DSM 28319 / BCRC 17069 / CCUG 31568 / BM 3577 / RP62A).